We begin with the raw amino-acid sequence, 279 residues long: Probable ribosomal RNA small subunit methyltransferase A (279 aa).

Asn-23, Leu-25, Gly-50, Glu-71, Asp-95, and Asn-110 together coordinate S-adenosyl-L-methionine.

The protein belongs to the class I-like SAM-binding methyltransferase superfamily. rRNA adenine N(6)-methyltransferase family. RsmA subfamily.

Its subcellular location is the cytoplasm. Specifically dimethylates two adjacent adenosines in the loop of a conserved hairpin near the 3'-end of 16S rRNA in the 30S particle. May play a critical role in biogenesis of 30S subunits. The sequence is that of Probable ribosomal RNA small subunit methyltransferase A from Thermococcus kodakarensis (strain ATCC BAA-918 / JCM 12380 / KOD1) (Pyrococcus kodakaraensis (strain KOD1)).